The chain runs to 337 residues: DNA-directed RNA polymerase subunit alpha (337 aa).

The interval 1-233 (MIQKNWQELI…DQLSIFVNFE (233 aa)) is alpha N-terminal domain (alpha-NTD). Positions 249-337 (FNPALLKKVD…DLAKRYEDQY (89 aa)) are alpha C-terminal domain (alpha-CTD).

It belongs to the RNA polymerase alpha chain family. In terms of assembly, homodimer. The RNAP catalytic core consists of 2 alpha, 1 beta, 1 beta' and 1 omega subunit. When a sigma factor is associated with the core the holoenzyme is formed, which can initiate transcription.

It catalyses the reaction RNA(n) + a ribonucleoside 5'-triphosphate = RNA(n+1) + diphosphate. In terms of biological role, DNA-dependent RNA polymerase catalyzes the transcription of DNA into RNA using the four ribonucleoside triphosphates as substrates. The polypeptide is DNA-directed RNA polymerase subunit alpha (Brucella abortus (strain S19)).